We begin with the raw amino-acid sequence, 632 residues long: Probable potassium transport system protein Kup 1 (632 aa).

Helical transmembrane passes span 19-39, 59-79, 110-130, 146-166, 178-198, 213-233, 256-276, 298-318, 346-366, 373-393, 403-423, and 428-448; these read LVLG…LYAL, VISM…VVFV, VLMM…VITP, PQLS…LFLI, FGPI…LHLV, ITFL…VFLV, WFVL…AMLL, MVLL…SGAF, IYLP…VISF, AAAY…LAAV, PALV…FFAA, and VAEG…LLMT.

Belongs to the HAK/KUP transporter (TC 2.A.72) family.

The protein resides in the cell inner membrane. The catalysed reaction is K(+)(in) + H(+)(in) = K(+)(out) + H(+)(out). Functionally, transport of potassium into the cell. Likely operates as a K(+):H(+) symporter. The protein is Probable potassium transport system protein Kup 1 of Cupriavidus necator (strain ATCC 17699 / DSM 428 / KCTC 22496 / NCIMB 10442 / H16 / Stanier 337) (Ralstonia eutropha).